The primary structure comprises 89 residues: Small ribosomal subunit protein uS17 (89 aa).

The protein belongs to the universal ribosomal protein uS17 family. Part of the 30S ribosomal subunit.

One of the primary rRNA binding proteins, it binds specifically to the 5'-end of 16S ribosomal RNA. The protein is Small ribosomal subunit protein uS17 of Xanthomonas campestris pv. campestris (strain B100).